We begin with the raw amino-acid sequence, 289 residues long: uncharacterized protein (289 aa).

Residues 2 to 62 form the HTH tetR-type domain; sequence NEKKERIIKT…SACEYYIGMS (61 aa). Residues 25–44 constitute a DNA-binding region (H-T-H motif); the sequence is TIQEIASECGISKGAFYLHF.

This is an uncharacterized protein from Bacillus subtilis (strain 168).